Reading from the N-terminus, the 168-residue chain is Phosphopantetheine adenylyltransferase (168 aa).

Substrate is bound at residue Thr14. ATP is bound by residues 14–15 and His22; that span reads TF. 3 residues coordinate substrate: Lys46, Leu78, and Arg92. ATP is bound by residues 93-95, Glu103, and 128-134; these read GLR and YSFISSS.

Belongs to the bacterial CoaD family. Homohexamer. Mg(2+) serves as cofactor.

It is found in the cytoplasm. It catalyses the reaction (R)-4'-phosphopantetheine + ATP + H(+) = 3'-dephospho-CoA + diphosphate. It participates in cofactor biosynthesis; coenzyme A biosynthesis; CoA from (R)-pantothenate: step 4/5. Its function is as follows. Reversibly transfers an adenylyl group from ATP to 4'-phosphopantetheine, yielding dephospho-CoA (dPCoA) and pyrophosphate. In Xanthomonas euvesicatoria pv. vesicatoria (strain 85-10) (Xanthomonas campestris pv. vesicatoria), this protein is Phosphopantetheine adenylyltransferase.